A 214-amino-acid chain; its full sequence is ATP phosphoribosyltransferase (214 aa).

The protein belongs to the ATP phosphoribosyltransferase family. Short subfamily. Heteromultimer composed of HisG and HisZ subunits.

The protein localises to the cytoplasm. It catalyses the reaction 1-(5-phospho-beta-D-ribosyl)-ATP + diphosphate = 5-phospho-alpha-D-ribose 1-diphosphate + ATP. It participates in amino-acid biosynthesis; L-histidine biosynthesis; L-histidine from 5-phospho-alpha-D-ribose 1-diphosphate: step 1/9. Catalyzes the condensation of ATP and 5-phosphoribose 1-diphosphate to form N'-(5'-phosphoribosyl)-ATP (PR-ATP). Has a crucial role in the pathway because the rate of histidine biosynthesis seems to be controlled primarily by regulation of HisG enzymatic activity. This is ATP phosphoribosyltransferase from Leptothrix cholodnii (strain ATCC 51168 / LMG 8142 / SP-6) (Leptothrix discophora (strain SP-6)).